The following is a 150-amino-acid chain: Profilin (150 aa).

The protein belongs to the profilin family. Occurs in many kinds of cells as a complex with monomeric actin in a 1:1 ratio.

The protein resides in the cytoplasm. The protein localises to the cytoskeleton. Binds to actin and affects the structure of the cytoskeleton. At high concentrations, profilin prevents the polymerization of actin, whereas it enhances it at low concentrations. By binding to PIP2, it inhibits the formation of IP3 and DG. The polypeptide is Profilin (Trypanosoma brucei brucei).